The following is a 126-amino-acid chain: Small ribosomal subunit protein uS13 (126 aa).

Residues 92–126 (HRRGLPVRGQRTKTNARTRKGPKKTVAGKKKATRK) form a disordered region.

It belongs to the universal ribosomal protein uS13 family. As to quaternary structure, part of the 30S ribosomal subunit. Forms a loose heterodimer with protein S19. Forms two bridges to the 50S subunit in the 70S ribosome.

Functionally, located at the top of the head of the 30S subunit, it contacts several helices of the 16S rRNA. In the 70S ribosome it contacts the 23S rRNA (bridge B1a) and protein L5 of the 50S subunit (bridge B1b), connecting the 2 subunits; these bridges are implicated in subunit movement. Contacts the tRNAs in the A and P-sites. This is Small ribosomal subunit protein uS13 from Deinococcus radiodurans (strain ATCC 13939 / DSM 20539 / JCM 16871 / CCUG 27074 / LMG 4051 / NBRC 15346 / NCIMB 9279 / VKM B-1422 / R1).